A 286-amino-acid polypeptide reads, in one-letter code: Carbohydrate-binding domain-containing protein Cthe_2159 (286 aa).

An N-terminal signal peptide occupies residues 1–20 (MSIKKLILAASILTTLALTG). Cys21 carries the N-palmitoyl cysteine lipid modification. Cys21 carries S-diacylglycerol cysteine lipidation. Residues 124–225 (GKDNVLTDAE…GIKVENTEEP (102 aa)) are polygalacturonic acid-binding. Arg152, Asp153, Asp154, Asn177, Asp178, Asp215, Asp243, Asp244, and Asp247 together coordinate Ca(2+).

Monomer.

The protein resides in the cell membrane. Functionally, binds cellulosic and pectic substrates. Displays no enzyme activity (in vitro). The protein is Carbohydrate-binding domain-containing protein Cthe_2159 of Acetivibrio thermocellus (strain ATCC 27405 / DSM 1237 / JCM 9322 / NBRC 103400 / NCIMB 10682 / NRRL B-4536 / VPI 7372) (Clostridium thermocellum).